The following is a 503-amino-acid chain: ATP synthase subunit alpha (503 aa).

Gly-169–Thr-176 serves as a coordination point for ATP.

This sequence belongs to the ATPase alpha/beta chains family. F-type ATPases have 2 components, CF(1) - the catalytic core - and CF(0) - the membrane proton channel. CF(1) has five subunits: alpha(3), beta(3), gamma(1), delta(1), epsilon(1). CF(0) has three main subunits: a(1), b(2) and c(9-12). The alpha and beta chains form an alternating ring which encloses part of the gamma chain. CF(1) is attached to CF(0) by a central stalk formed by the gamma and epsilon chains, while a peripheral stalk is formed by the delta and b chains.

It localises to the cell membrane. The enzyme catalyses ATP + H2O + 4 H(+)(in) = ADP + phosphate + 5 H(+)(out). Produces ATP from ADP in the presence of a proton gradient across the membrane. The alpha chain is a regulatory subunit. This chain is ATP synthase subunit alpha, found in Lactobacillus delbrueckii subsp. bulgaricus (strain ATCC BAA-365 / Lb-18).